The sequence spans 80 residues: Exodeoxyribonuclease 7 small subunit (80 aa).

Belongs to the XseB family. In terms of assembly, heterooligomer composed of large and small subunits.

It is found in the cytoplasm. The enzyme catalyses Exonucleolytic cleavage in either 5'- to 3'- or 3'- to 5'-direction to yield nucleoside 5'-phosphates.. Bidirectionally degrades single-stranded DNA into large acid-insoluble oligonucleotides, which are then degraded further into small acid-soluble oligonucleotides. The chain is Exodeoxyribonuclease 7 small subunit from Streptomyces avermitilis (strain ATCC 31267 / DSM 46492 / JCM 5070 / NBRC 14893 / NCIMB 12804 / NRRL 8165 / MA-4680).